The sequence spans 285 residues: ATP synthase gamma chain (285 aa).

The protein belongs to the ATPase gamma chain family. As to quaternary structure, F-type ATPases have 2 components, CF(1) - the catalytic core - and CF(0) - the membrane proton channel. CF(1) has five subunits: alpha(3), beta(3), gamma(1), delta(1), epsilon(1). CF(0) has three main subunits: a, b and c.

The protein resides in the cell membrane. Its function is as follows. Produces ATP from ADP in the presence of a proton gradient across the membrane. The gamma chain is believed to be important in regulating ATPase activity and the flow of protons through the CF(0) complex. The protein is ATP synthase gamma chain of Dehalococcoides mccartyi (strain CBDB1).